Here is a 268-residue protein sequence, read N- to C-terminus: Lipase (268 aa).

The N-terminal stretch at 1–34 (MRLSRRAATASALLLTPALALFGASAAVSAPRIQ) is a signal peptide. Residue Ser44 is the Nucleophile of the active site. Disulfide bonds link Cys61-Cys86, Cys127-Cys135, and Cys185-Cys232. Residue His250 is part of the active site.

Monomer.

It localises to the secreted. The catalysed reaction is a triacylglycerol + H2O = a diacylglycerol + a fatty acid + H(+). The enzyme catalyses hexadecanoyl-CoA + H2O = hexadecanoate + CoA + H(+). Its activity is regulated as follows. Inhibited by 3,4-dichloroisocoumarin and tetrahydrolipstatin in the absence of substrate, but by phenylmethylsulfonyl fluoride (PMSF) only in the presence of substrate. Several water-miscible solvents enhance the lipase hydrolytic activity in vitro. Tetrahydrofuran and N,N-dimethylformamide (both 50%) inactivate the enzyme with t1/2 of 5 minutes and t1/2 of 2 hours, respectively. Its function is as follows. Catalyzes the hydrolysis of p-nitrophenyl esters, alpha- and beta-naphthyl esters, and triacylglycerols, with a preference for medium acyl chain length (C8-C12). Shows a much higher hydrolysis rate of glycerol esters of unsaturated C16 and C18 fatty acids than that of their saturated counterparts, and a preference for cis double bond. Is also able to hydrolyze several natural oils and Tween detergents. Also displays thioesterase and phospholipase activities, towards palmitoyl-coenzyme A and diheptanoyl glycerophosphocholine, respectively. Shows transesterification activity of racemic 1-phenyl ethanol with vinyl acetate in hexane, proceeding with partial (R)-enantioselectivity. The polypeptide is Lipase (Streptomyces rimosus).